Consider the following 721-residue polypeptide: BBSome complex member BBS2 (721 aa).

Positions 325-369 form a coiled coil; it reads KGNLLDTSVEQDLIRELSQKKQNLLLELRNYEESTKAELSSPLNE.

As to quaternary structure, part of BBSome complex, that contains BBS1, BBS2, BBS4, BBS5, BBS7, BBS8/TTC8, BBS9 and BBIP10. Interacts (via C-terminus) with BBS7. Interacts (via coiled coil domain) with MKKS. Interacts with CCDC28B. Interacts with DLEC1.

Its subcellular location is the cell projection. It localises to the cilium membrane. The protein resides in the cytoplasm. The protein localises to the cytoskeleton. It is found in the microtubule organizing center. Its subcellular location is the centrosome. It localises to the centriolar satellite. In terms of biological role, the BBSome complex is thought to function as a coat complex required for sorting of specific membrane proteins to the primary cilia. The BBSome complex is required for ciliogenesis but is dispensable for centriolar satellite function. This ciliogenic function is mediated in part by the Rab8 GDP/GTP exchange factor, which localizes to the basal body and contacts the BBSome. Rab8(GTP) enters the primary cilium and promotes extension of the ciliary membrane. Firstly the BBSome associates with the ciliary membrane and binds to RAB3IP/Rabin8, the guanosyl exchange factor (GEF) for Rab8 and then the Rab8-GTP localizes to the cilium and promotes docking and fusion of carrier vesicles to the base of the ciliary membrane. The BBSome complex, together with the LTZL1, controls SMO ciliary trafficking and contributes to the sonic hedgehog (SHH) pathway regulation. Required for proper BBSome complex assembly and its ciliary localization. The chain is BBSome complex member BBS2 (Bbs2) from Mus musculus (Mouse).